The chain runs to 367 residues: 2-aminoethylphosphonate--pyruvate transaminase (367 aa).

The residue at position 194 (K194) is an N6-(pyridoxal phosphate)lysine.

The protein belongs to the class-V pyridoxal-phosphate-dependent aminotransferase family. PhnW subfamily. Homodimer. It depends on pyridoxal 5'-phosphate as a cofactor.

It carries out the reaction (2-aminoethyl)phosphonate + pyruvate = phosphonoacetaldehyde + L-alanine. In terms of biological role, involved in phosphonate degradation. The polypeptide is 2-aminoethylphosphonate--pyruvate transaminase (Salmonella gallinarum (strain 287/91 / NCTC 13346)).